A 1058-amino-acid chain; its full sequence is Leucine--tRNA ligase, cytoplasmic (1058 aa).

A 'HIGH' region motif is present at residues Pro48 to His58. The 'KMSKS' region signature appears at Lys711 to Ser715. Lys714 is a binding site for ATP.

This sequence belongs to the class-I aminoacyl-tRNA synthetase family.

It localises to the cytoplasm. The enzyme catalyses tRNA(Leu) + L-leucine + ATP = L-leucyl-tRNA(Leu) + AMP + diphosphate. This chain is Leucine--tRNA ligase, cytoplasmic (leuS), found in Dictyostelium discoideum (Social amoeba).